The chain runs to 222 residues: Hexitol phosphatase B (222 aa).

D13 (nucleophile) is an active-site residue. A divalent metal cation is bound by residues D13 and D15. Residues 13–15 (DMD), 115–116 (SA), and K148 each bind substrate. D15 serves as the catalytic Proton donor. D173 is an a divalent metal cation binding site.

Belongs to the HAD-like hydrolase superfamily. CbbY/CbbZ/Gph/YieH family. Requires Mg(2+) as cofactor. Mn(2+) is required as a cofactor. The cofactor is Co(2+). Zn(2+) serves as cofactor.

The enzyme catalyses sugar phosphate + H2O = sugar + phosphate.. The catalysed reaction is 2-deoxy-D-glucose 6-phosphate + H2O = 2-deoxy-D-glucose + phosphate. It catalyses the reaction D-mannitol 1-phosphate + H2O = D-mannitol + phosphate. It carries out the reaction D-sorbitol 6-phosphate + H2O = D-sorbitol + phosphate. Functionally, sugar-phosphate phosphohydrolase that catalyzes the dephosphorylation of D-mannitol 1-phosphate and D-sorbitol 6-phosphate. Also catalyzes the dephosphorylation of 2-deoxyglucose 6-phosphate (2dGlu6P); this is a biologically important activity in vivo since it contributes to the elimination of this toxic compound and plays an important role in the resistance of E.coli to 2-deoxyglucose. To a lesser extent, is also able to dephosphorylate mannose 6-phosphate (Man6P), erythrose-4-phosphate, 2-deoxyribose-5-phosphate (2dRib5P), ribose-5-phosphate (Rib5P) and glucose-6-phosphate (Glu6P) in vitro. The sequence is that of Hexitol phosphatase B from Escherichia coli (strain K12).